We begin with the raw amino-acid sequence, 93 residues long: Small ribosomal subunit protein uS19 (93 aa).

Residues 73–93 (EFSPTRTYRGHDKKDKKIQKK) form a disordered region.

The protein belongs to the universal ribosomal protein uS19 family.

In terms of biological role, protein S19 forms a complex with S13 that binds strongly to the 16S ribosomal RNA. This is Small ribosomal subunit protein uS19 from Phytoplasma mali (strain AT).